A 71-amino-acid chain; its full sequence is Protein CYSTEINE-RICH TRANSMEMBRANE MODULE 6 (71 aa).

Polar residues predominate over residues 1 to 12 (MSQYSQNQSSGA). The interval 1-36 (MSQYSQNQSSGAYPTPPVSTGPYVAPPPLGYPTNDT) is disordered. Positions 14–30 (PTPPVSTGPYVAPPPLG) are enriched in pro residues. The helical transmembrane segment at 48 to 64 (SKGDGFLKGCLAAMCCC) threads the bilayer.

This sequence belongs to the CYSTM1 family. In terms of assembly, homodimer and heterodimers. Interacts with CYSTM7 and WIH1/CYSTM13. As to expression, mostly expressed in roots, stems, rosette leaves and siliques and, to a lower extent, in flowers and cauline leaves.

The protein localises to the cell membrane. Its subcellular location is the cytoplasm. Involved in resistance to abiotic stress. This Arabidopsis thaliana (Mouse-ear cress) protein is Protein CYSTEINE-RICH TRANSMEMBRANE MODULE 6.